We begin with the raw amino-acid sequence, 600 residues long: Proline--tRNA ligase (600 aa).

The protein belongs to the class-II aminoacyl-tRNA synthetase family. ProS type 1 subfamily. As to quaternary structure, homodimer.

Its subcellular location is the cytoplasm. The catalysed reaction is tRNA(Pro) + L-proline + ATP = L-prolyl-tRNA(Pro) + AMP + diphosphate. In terms of biological role, catalyzes the attachment of proline to tRNA(Pro) in a two-step reaction: proline is first activated by ATP to form Pro-AMP and then transferred to the acceptor end of tRNA(Pro). As ProRS can inadvertently accommodate and process non-cognate amino acids such as alanine and cysteine, to avoid such errors it has two additional distinct editing activities against alanine. One activity is designated as 'pretransfer' editing and involves the tRNA(Pro)-independent hydrolysis of activated Ala-AMP. The other activity is designated 'posttransfer' editing and involves deacylation of mischarged Ala-tRNA(Pro). The misacylated Cys-tRNA(Pro) is not edited by ProRS. The polypeptide is Proline--tRNA ligase (Prochlorococcus marinus (strain MIT 9312)).